The following is a 334-amino-acid chain: Protein U17/U16 (334 aa).

Belongs to the herpesviridae US22 family. In terms of processing, isoform 1 is not glycosylated.

In terms of biological role, isoform 3 can transactivate the human immunodeficiency virus type 1 promoter. The protein is Protein U17/U16 (U17/U16) of Homo sapiens (Human).